A 170-amino-acid polypeptide reads, in one-letter code: Sec-independent protein translocase protein TATA, chloroplastic (170 aa).

Residues methionine 1–valine 61 constitute a chloroplast transit peptide. The Lumenal segment spans residues alanine 62–cysteine 84. Residues leucine 85 to glycine 105 traverse the membrane as a helical segment. The Stromal portion of the chain corresponds to proline 106–alanine 170. Residues phenylalanine 130–glycine 139 are compositionally biased toward basic and acidic residues. The disordered stretch occupies residues phenylalanine 130–alanine 170.

It belongs to the TatA/E family. As to quaternary structure, in thylakoid membranes, TATC and TATB form a large receptor complex, containing about eight TATC-TATB pairs, which binds the precursor protein. Twin arginine signal peptide promotes pH-triggered docking of TATA oligomers to TATC-TATB receptor complex, inducing a conformational switch of TATA that results in activation of the translocase. TATA dissociates from TATC-TATB upon completion of translocation.

It localises to the plastid. The protein resides in the chloroplast thylakoid membrane. Its function is as follows. Part of the twin-arginine translocation (Tat) system that transports large folded proteins containing a characteristic twin-arginine motif in their signal peptide across the thylakoid membrane. Involved in delta pH-dependent protein transport required for chloroplast development, especially thylakoid membrane formation. TATC and TATB mediate precursor recognition, whereas TATA facilitates translocation. The protein is Sec-independent protein translocase protein TATA, chloroplastic of Zea mays (Maize).